A 418-amino-acid chain; its full sequence is MEFDVKDLSLAEEGLKRIEWAEMDMPVLRQIRERFSKEKPLKGKKISACLHVTTETANLMRTLKEGGAEVYLTASNPLSTQDDVAAALVKYFEIPVFAIRGEDRETYYKHLRAVIEKEPDVVIDDGADLISTLHKEYPGLAEKVLGGMEETTTGVIRLRAMAEQGVLKFPIIAVNDAYTKHMFDNRYGTGQSTIDGILRATNRLLAGSYFVVAGYGWCGKGVAQRARGMGAIVIVTEVDPIKALEARMDGFLVMPMEEAAKLGDFFVTVTGNIHVIRREHFEVMKDGAIVANSGHFNVEIDIPALEEMAVEKREIRKEVTEYKLKDGRRIYLLAEGRLVNLAAAEGHPASVMDMSFSNQALSAEYIVKHHKELEKKVYRVPREIDEAVARLKLNALGIKIDELTEEQKKYLSSWEMGT.

Substrate contacts are provided by Thr-53, Asp-125, and Glu-150. Residue 151–153 (TTT) participates in NAD(+) binding. Residues Lys-180 and Asp-184 each contribute to the substrate site. NAD(+) contacts are provided by residues Asn-185, 214-219 (GYGWCG), Glu-237, Asn-272, 293-295 (SGH), and Asn-340.

This sequence belongs to the adenosylhomocysteinase family. The cofactor is NAD(+).

The protein resides in the cytoplasm. It carries out the reaction S-adenosyl-L-homocysteine + H2O = L-homocysteine + adenosine. The protein operates within amino-acid biosynthesis; L-homocysteine biosynthesis; L-homocysteine from S-adenosyl-L-homocysteine: step 1/1. Its function is as follows. May play a key role in the regulation of the intracellular concentration of adenosylhomocysteine. This chain is Adenosylhomocysteinase, found in Aquifex aeolicus (strain VF5).